A 452-amino-acid polypeptide reads, in one-letter code: Bifunctional protein GlmU (452 aa).

The segment at 1–232 (MTARNSLTIV…EDEVRGINTK (232 aa)) is pyrophosphorylase. Residues 11–14 (LAAG), Lys25, Gln78, and 83–84 (GT) contribute to the UDP-N-acetyl-alpha-D-glucosamine site. Asp108 is a binding site for Mg(2+). 4 residues coordinate UDP-N-acetyl-alpha-D-glucosamine: Gly144, Glu158, Asn173, and Asn230. Asn230 contributes to the Mg(2+) binding site. Residues 233 to 253 (AQLAEAETVMQTRLRLAAMAA) form a linker region. Residues 254–452 (GVTLIAPETV…KSRHRKPKAH (199 aa)) form an N-acetyltransferase region. UDP-N-acetyl-alpha-D-glucosamine contacts are provided by Arg319 and Lys337. His349 functions as the Proton acceptor in the catalytic mechanism. 2 residues coordinate UDP-N-acetyl-alpha-D-glucosamine: Tyr352 and Asn363. Residues Ala366, 372–373 (NY), Ser391, Ser409, and Arg426 contribute to the acetyl-CoA site.

The protein in the N-terminal section; belongs to the N-acetylglucosamine-1-phosphate uridyltransferase family. In the C-terminal section; belongs to the transferase hexapeptide repeat family. As to quaternary structure, homotrimer. Mg(2+) is required as a cofactor.

The protein resides in the cytoplasm. It catalyses the reaction alpha-D-glucosamine 1-phosphate + acetyl-CoA = N-acetyl-alpha-D-glucosamine 1-phosphate + CoA + H(+). It carries out the reaction N-acetyl-alpha-D-glucosamine 1-phosphate + UTP + H(+) = UDP-N-acetyl-alpha-D-glucosamine + diphosphate. It functions in the pathway nucleotide-sugar biosynthesis; UDP-N-acetyl-alpha-D-glucosamine biosynthesis; N-acetyl-alpha-D-glucosamine 1-phosphate from alpha-D-glucosamine 6-phosphate (route II): step 2/2. It participates in nucleotide-sugar biosynthesis; UDP-N-acetyl-alpha-D-glucosamine biosynthesis; UDP-N-acetyl-alpha-D-glucosamine from N-acetyl-alpha-D-glucosamine 1-phosphate: step 1/1. The protein operates within bacterial outer membrane biogenesis; LPS lipid A biosynthesis. In terms of biological role, catalyzes the last two sequential reactions in the de novo biosynthetic pathway for UDP-N-acetylglucosamine (UDP-GlcNAc). The C-terminal domain catalyzes the transfer of acetyl group from acetyl coenzyme A to glucosamine-1-phosphate (GlcN-1-P) to produce N-acetylglucosamine-1-phosphate (GlcNAc-1-P), which is converted into UDP-GlcNAc by the transfer of uridine 5-monophosphate (from uridine 5-triphosphate), a reaction catalyzed by the N-terminal domain. The chain is Bifunctional protein GlmU from Rhodopseudomonas palustris (strain TIE-1).